Here is a 252-residue protein sequence, read N- to C-terminus: Ciliogenesis and planar polarity effector 2 (252 aa).

The small GTPase-like stretch occupies residues glutamine 46–valine 252. GTP-binding positions include threonine 62–serine 67 and threonine 173–aspartate 176.

Belongs to the small GTPase superfamily. Rab family.

The protein localises to the cytoplasm. The protein resides in the cytoskeleton. It is found in the cilium basal body. In terms of biological role, potential effector of the planar cell polarity signaling pathway. Plays a role in targeted membrane trafficking most probably at the level of vesicle fusion with membranes. Involved in cilium biogenesis by regulating the transport of cargo proteins to the basal body and to the apical tips of cilia. More generally involved in exocytosis in secretory cells. The protein is Ciliogenesis and planar polarity effector 2 (cplane2) of Danio rerio (Zebrafish).